A 418-amino-acid polypeptide reads, in one-letter code: Secreted aspartic protease 6 (418 aa).

Positions methionine 1–alanine 18 are cleaved as a signal peptide. A propeptide spans alanine 19–arginine 76 (activation peptide). Residues tyrosine 90–alanine 404 enclose the Peptidase A1 domain. Aspartate 108 is a catalytic residue. Aspartate 108–glycine 110 serves as a coordination point for pepstatin A. A disulfide bond links cysteine 123 and cysteine 135. N-linked (GlcNAc...) asparagine glycosylation is present at asparagine 138. Aspartate 268 contributes to the Zn(2+) binding site. The active site involves aspartate 294. Aspartate 294–threonine 298 is a pepstatin A binding site. Cysteine 332 and cysteine 370 are oxidised to a cystine.

This sequence belongs to the peptidase A1 family.

It is found in the secreted. The enzyme catalyses Preferential cleavage at the carboxyl of hydrophobic amino acids, but fails to cleave 15-Leu-|-Tyr-16, 16-Tyr-|-Leu-17 and 24-Phe-|-Phe-25 of insulin B chain. Activates trypsinogen, and degrades keratin.. Its activity is regulated as follows. Inhibited by pepstatin A analogs. Its function is as follows. Secreted aspartic peptidases (SAPs) are a group of ten acidic hydrolases considered as key virulence factors. These enzymes supply the fungus with nutrient amino acids as well as are able to degrade the selected host's proteins involved in the immune defense. Moreover, acts toward human hemoglobin though limited proteolysis to generate a variety of antimicrobial hemocidins, enabling to compete with the other microorganisms of the same physiological niche using the microbicidal peptides generated from the host protein. The polypeptide is Secreted aspartic protease 6 (Candida albicans (Yeast)).